A 38-amino-acid polypeptide reads, in one-letter code: Large ribosomal subunit protein bL36 (38 aa).

Belongs to the bacterial ribosomal protein bL36 family.

The protein is Large ribosomal subunit protein bL36 of Pseudoalteromonas atlantica (strain T6c / ATCC BAA-1087).